Consider the following 167-residue polypeptide: UTP pyrophosphatase (167 aa).

The enzyme catalyses UTP + H2O = UMP + diphosphate + H(+). In terms of biological role, specifically catalyzes the hydrolysis of UTP to UMP and diphosphate in vitro, albeit at apparently slow rate. Shows no activity towards ATP, GTP, CTP, dTTP and ITP as substrates. The polypeptide is UTP pyrophosphatase (Escherichia coli (strain K12)).